Reading from the N-terminus, the 872-residue chain is DNA mismatch repair protein MutS (872 aa).

G602–S609 lines the ATP pocket.

It belongs to the DNA mismatch repair MutS family.

This protein is involved in the repair of mismatches in DNA. It is possible that it carries out the mismatch recognition step. This protein has a weak ATPase activity. This is DNA mismatch repair protein MutS from Staphylococcus aureus (strain Mu3 / ATCC 700698).